The primary structure comprises 120 residues: Protein BEX4 (120 aa).

The disordered stretch occupies residues 1–54 (MESKEELAANNLNGENAQQENEGGEQAPTQNEEESRHLGGGEGQKPGGNIRRGR). The segment covering 8–27 (AANNLNGENAQQENEGGEQA) has biased composition (low complexity). An interaction with SIRT2 region spans residues 31–90 (NEEESRHLGGGEGQKPGGNIRRGRVRRLVPNFRWAIPNRHIEHNEARDDVERFVGQMMEI). Residues 31 to 120 (NEEESRHLGG…DNHYDFCLIP (90 aa)) are interaction with alpha-tubulin. C117 contacts Zn(2+).

This sequence belongs to the BEX family. Interacts with alpha-tubulin. Interacts with SIRT2. In terms of processing, ubiquitinated and degraded by the proteasome. As to expression, very high expression in heart, skeletal muscle, liver, and kidney. The levels of expression are uniform throughout the brain.

It is found in the cytoplasm. The protein resides in the cytoskeleton. The protein localises to the spindle pole. It localises to the nucleus. Functionally, may play a role in microtubule deacetylation by negatively regulating the SIRT2 deacetylase activity toward alpha-tubulin and thereby participate in the control of cell cycle progression and genomic stability. In absence of reductive stress, acts as a pseudosubstrate for the CRL2(FEM1B) complex: associates with FEM1B via zinc, thereby preventing association between FEM1B and its substrates. This chain is Protein BEX4, found in Homo sapiens (Human).